The primary structure comprises 1187 residues: Intraflagellar transport protein 122 homolog (1187 aa).

WD repeat units lie at residues 16-54 (KVEQCIYDLAFRPDGSQLIVAAGNRVLVYDTADGTLIQP), 57-97 (GHKD…LKYT), 99-135 (NDSIQCVSYNPVTHQLASCSSGDFGLWSPEQKSVSKH), 137-175 (VSSKITCCGWTNDGQYLALGMMNGVVSIRNKNGEEKVKI), 180-223 (GSSS…IGKD), 225-264 (SLTFDPCCVSFFSKGEYMVLCGSDRQAALYTRDGVRLGSI), 266-306 (EQNA…HGLY), and 459-498 (KQNTSVRCLDMSSNRSRLAVVDEHNTCLVYDIHTRELLFQ). The segment at 1070-1094 (KSWQEMSSGESQCLKLEDGPDDPED) is disordered.

In terms of assembly, component of the IFT complex A (IFT-A) complex.

The protein localises to the cell projection. It is found in the cilium. The protein resides in the cytoplasm. It localises to the cytoskeleton. Its subcellular location is the cilium basal body. In terms of biological role, required for cilia formation during embryonal development. Acts as a negative regulator of Shh signaling. The sequence is that of Intraflagellar transport protein 122 homolog (ift122) from Danio rerio (Zebrafish).